The chain runs to 172 residues: MEDTKIRLAIYPGTFDPLTNGHISIIHRAKHLFDKIIIAVAQDSGKKPLFSIEERVSMINTTFFSDHMVDVENFSGLLVDYVEKKNAKTILRGLRAVSDFEYEFQTSLMNRKLCPEIETIFLISDYKWLYISSTVVKTVASLGGDVTDFVPENVLICLKTKYCQSKSNLVIT.

Threonine 14 contributes to the substrate binding site. Residues 14 to 15 (TF) and histidine 22 each bind ATP. The substrate site is built by lysine 46, leucine 78, and arginine 92. Residues 93-95 (GLR), glutamate 103, and 128-134 (WLYISST) contribute to the ATP site.

The protein belongs to the bacterial CoaD family. As to quaternary structure, homohexamer. Requires Mg(2+) as cofactor.

It localises to the cytoplasm. It catalyses the reaction (R)-4'-phosphopantetheine + ATP + H(+) = 3'-dephospho-CoA + diphosphate. Its pathway is cofactor biosynthesis; coenzyme A biosynthesis; CoA from (R)-pantothenate: step 4/5. Reversibly transfers an adenylyl group from ATP to 4'-phosphopantetheine, yielding dephospho-CoA (dPCoA) and pyrophosphate. The chain is Phosphopantetheine adenylyltransferase from Lawsonia intracellularis (strain PHE/MN1-00).